The following is a 228-amino-acid chain: Putative adhesin A1I_01215 (228 aa).

The N-terminal stretch at 1 to 22 is a signal peptide; sequence MKKLLLIAATSATVLSSALSFA.

In Rickettsia bellii (strain OSU 85-389), this protein is Putative adhesin A1I_01215.